A 142-amino-acid chain; its full sequence is Large ribosomal subunit protein uL11 (142 aa).

This sequence belongs to the universal ribosomal protein uL11 family. In terms of assembly, part of the ribosomal stalk of the 50S ribosomal subunit. Interacts with L10 and the large rRNA to form the base of the stalk. L10 forms an elongated spine to which L12 dimers bind in a sequential fashion forming a multimeric L10(L12)X complex. In terms of processing, one or more lysine residues are methylated.

Functionally, forms part of the ribosomal stalk which helps the ribosome interact with GTP-bound translation factors. This chain is Large ribosomal subunit protein uL11, found in Lachnoclostridium phytofermentans (strain ATCC 700394 / DSM 18823 / ISDg) (Clostridium phytofermentans).